A 1256-amino-acid chain; its full sequence is Nephrin (1256 aa).

Positions M1 to L35 are cleaved as a signal peptide. Residues A36–P1078 are Extracellular-facing. 6 consecutive Ig-like C2-type domains span residues P39–S144, P149–T247, P256–T347, P354–T448, P454–V554, and P558–S649. N54 is a glycosylation site (N-linked (GlcNAc...) asparagine). Disulfide bonds link C67–C125, C174–C231, and C279–C331. N-linked (GlcNAc...) asparagine glycosylation is found at N370 and N415. Residues C375 and C431 are joined by a disulfide bond. S446 carries the phosphoserine modification. Residues C479 and C542 are joined by a disulfide bond. Residues T491 to V516 are disordered. Positions K494–R510 are enriched in basic and acidic residues. N-linked (GlcNAc...) asparagine glycosylation is found at N561, N578, N591, and N722. The cysteines at positions 581 and 637 are disulfide-linked. 2 consecutive Ig-like C2-type domains span residues P754–L846 and P852–S953. Cystine bridges form between C775/C830 and C877/C934. Residues P957–G1051 form the Fibronectin type-III domain. The segment at T1048 to P1071 is disordered. The helical transmembrane segment at V1079 to L1099 threads the bilayer. Over W1100–V1256 the chain is Cytoplasmic. S1112 carries the post-translational modification Phosphoserine. Positions S1112–Y1128 are enriched in basic and acidic residues. Positions S1112–T1143 are disordered. The residue at position 1115 (T1115) is a Phosphothreonine. At S1119 the chain carries Phosphoserine. A Phosphotyrosine; by FYN modification is found at Y1208.

It belongs to the immunoglobulin superfamily. As to quaternary structure, interacts with NPHS2 and with CD2AP (via C-terminal domain). Interacts with MAGI1 (via PDZ 2 and 3 domains) forming a tripartite complex with IGSF5/JAM4. Forms a complex with ACTN4, CASK, IQGAP1, MAGI2, SPTAN1 and SPTBN1. Interacts with DDN; the interaction is direct. Self-associates (via the Ig-like domains). Also interacts (via the Ig-like domains) with KIRREL1 and KIRREL2; the interaction with KIRREL1 is dependent on KIRREL1 glycosylation. Interacts with KIRREL3. Interacts with phosphatidylinositol 3-kinase regulatory subunit PIK3R1; the interaction is reduced by high glucose levels. Post-translationally, phosphorylated at Tyr-1208 by FYN, leading to the recruitment and activation of phospholipase C-gamma-1/PLCG1. Tyrosine phosphorylation is reduced by high glucose levels. Dephosphorylated by tensin TNS2 which leads to reduced binding of NPHN1 to PIK3R1. In terms of tissue distribution, expressed in kidney glomeruli. In the embryo, expressed in the mesonephric kidney at 11 dpc with strong expression in cranial tubules with podocyte-like structures. Expression is observed in the podocytes of the developing kidney from 13 dpc. High expression is also detected in the developing cerebellum, hindbrain, spinal cord, retina and hypothalamus. Expressed in skeletal muscle during myoblast fusion such as in the adult following acute injury and in the embryo but not detected in uninjured adult skeletal muscle. Isoform 1 and isoform 2 are expressed in the newborn brain and developing cerebellum. Isoform 1 is the predominant isoform in adult kidney.

Its subcellular location is the cell membrane. Seems to play a role in the development or function of the kidney glomerular filtration barrier. Regulates glomerular vascular permeability. May anchor the podocyte slit diaphragm to the actin cytoskeleton. Plays a role in skeletal muscle formation through regulation of myoblast fusion. This Mus musculus (Mouse) protein is Nephrin (Nphs1).